The chain runs to 138 residues: ATP synthase epsilon chain, chloroplastic (138 aa).

It belongs to the ATPase epsilon chain family. In terms of assembly, F-type ATPases have 2 components, CF(1) - the catalytic core - and CF(0) - the membrane proton channel. CF(1) has five subunits: alpha(3), beta(3), gamma(1), delta(1), epsilon(1). CF(0) has three main subunits: a, b and c.

Its subcellular location is the plastid. It localises to the chloroplast thylakoid membrane. In terms of biological role, produces ATP from ADP in the presence of a proton gradient across the membrane. The protein is ATP synthase epsilon chain, chloroplastic of Galdieria sulphuraria (Red alga).